The following is a 699-amino-acid chain: Sarcoplasmic reticulum histidine-rich calcium-binding protein (699 aa).

An N-terminal signal peptide occupies residues 1–28; the sequence is MGHHRPWLHASVLWAGVASLLLPPAMTQ. A disordered region spans residues 50–95; it reads SEEASAELRHHLHSPRDHPDENKDVSTENGHHFWSHPDREKEDEDV. Basic and acidic residues predominate over residues 55 to 89; it reads AELRHHLHSPRDHPDENKDVSTENGHHFWSHPDRE. T76 carries the phosphothreonine; by FAM20C modification. Repeat copies occupy residues 106–121, 134–154, 155–177, 180–213, 214–237, 238–270, 271–294, 295–318, 319–342, and 343–365. The segment at 106 to 342 is 6 X approximate tandem repeats; it reads HRSQDHKVGD…SGEHHHHVPD (237 aa). The 4 X tandem repeats, acidic stretch occupies residues 106–365; it reads HRSQDHKVGD…DVSTERWHQG (260 aa). 2 positions are modified to phosphoserine; by FAM20C: S119 and S145. Residues 127 to 617 are disordered; it reads HGGQARGHRG…EDTGPQDAQE (491 aa). Basic residues-rich tracts occupy residues 148–158 and 173–183; these read HRHHLPSHRSH and HHHHILRHGHR. Residues 187 to 206 show a composition bias toward acidic residues; the sequence is GEDDEGEEEEEEEEEEEEAS. Residues 231-241 show a composition bias toward basic residues; it reads HHHHGPSHRHQ. Residues 244 to 263 are compositionally biased toward acidic residues; the sequence is EEDDDDDDDDDDDDDDDDVS. Residues 288 to 298 show a composition bias toward basic residues; that stretch reads HHHRDPSHRHR. Residues 302–311 show a composition bias toward acidic residues; the sequence is EDDNDDDDVS. Positions 324–335 are enriched in basic and acidic residues; it reads HRKEEVEAVSGE. Position 333 is a phosphoserine (S333). A compositionally biased stretch (basic residues) spans 336-347; it reads HHHHVPDHRHQG. Residues S358 and S431 each carry the phosphoserine; by FAM20C modification. Basic and acidic residues-rich tracts occupy residues 444 to 463 and 470 to 481; these read SHQD…EMSH and VVKDRSHLRKDD. Phosphoserine; by FAM20C is present on S494. Residues 504–515 show a composition bias toward basic and acidic residues; it reads QGEKGTHHGSRD. 2 stretches are compositionally biased toward acidic residues: residues 532-551 and 567-581; these read QEEE…DEER and SEEE…EEDE. Position 567 is a phosphoserine; by FAM20C (S567). A metal-binding region spans residues 627-673; it reads CGYCSFCNRCTECESCHCDEENMGEHCDQCQHCQFCYLCPLVCETVC.

Belongs to the HRC family.

It is found in the sarcoplasmic reticulum lumen. Functionally, may play a role in the regulation of calcium sequestration or release in the SR of skeletal and cardiac muscle. This chain is Sarcoplasmic reticulum histidine-rich calcium-binding protein (HRC), found in Homo sapiens (Human).